The following is an 840-amino-acid chain: MSKYEFIKIEKKWQEFWDNNKTYKVEEDPSIPKEKRLYILDMFPYPSANGLHVGHPEGYTATDIFGRYKLLNGFHVLHPIGFDSFGLPAENYAIQTGTHPQKSTEENINKFKKQIKALGFAYDWDREIRTHEENYYKWTQWIFLQLYKKGLAYVKEMPVWYCPELGTVLANEEIIQTSDGPKSERGSYSVEKKYLRQWVLKITKYAERLLDDLEELEWPESVKEMQRNWIGKSTGVEIEFEIEGHSDKIKVFTTRPDTIFGITYLVIAPENKLIEKITKNNFKQNVLKYVKHEELKSDLNRTSLEKDKSGVFTGSYAFHPITNEKIPIWVGSYVLGTYGTGAVMGVPAHDERDFQFAKKYQLKILPVISKSGKNEILEKAFVDDGISINSPNEFNNLKNSEVKDKVIKWLTKNKKGKEKVAYKLRDWIFSRQRYWGEPIPILFDKLGNAIPLEENDLPLKLPEIANYKPSGTGESPLSRIKDWVNVKDMGFTRETNTMPQWAGSCWYYLRYLDPKNSKEFANKKKIEYWMPVDLYIGGAEHTVLHLLYSRFWHKVLYDLGYVNTKEPFKKLINQGIITSFSYQKENGVLIPNDQVIEKDNKFFDKKDNKEVTQVIAKMSKSLKNVINPDDIIKEFGADSMRIYEMFMGPLTDSKPWNTKGIIGVFRFLNKIWNLREKELSKENPPREIISELHKVIKKVTEDTEKLNFNTAISAMMIFINELLKYEKNYLNIFKPFIIILSPYAPHLAEELWEYIGELPSLFKNSKWPKFDESLIIKDKKEIVLQINGKIKDKILLNKETGEKELKEIAMENSKIKSNLLNKKIVKIIVIKNKLVNIVIK.

Residues 44 to 55 (PYPSANGLHVGH) carry the 'HIGH' region motif. Positions 617 to 621 (KMSKS) match the 'KMSKS' region motif. Position 620 (K620) interacts with ATP.

This sequence belongs to the class-I aminoacyl-tRNA synthetase family.

The protein resides in the cytoplasm. The catalysed reaction is tRNA(Leu) + L-leucine + ATP = L-leucyl-tRNA(Leu) + AMP + diphosphate. This chain is Leucine--tRNA ligase, found in Borreliella burgdorferi (strain ZS7) (Borrelia burgdorferi).